Consider the following 63-residue polypeptide: Cecropin (63 aa).

An N-terminal signal peptide occupies residues Met-1–Ala-23. Arg-62 is modified (arginine amide).

In terms of assembly, monomer. As to expression, hemolymph.

Its subcellular location is the secreted. Its function is as follows. Cecropins have lytic and antibacterial activity against several Gram-negative bacteria. This Glossina morsitans morsitans (Savannah tsetse fly) protein is Cecropin.